We begin with the raw amino-acid sequence, 476 residues long: Bifunctional protein HldE (476 aa).

A ribokinase region spans residues 1–318 (MAQYSAEFKQ…ENAIHARPET (318 aa)). 195-198 (NMSE) lines the ATP pocket. Residue D264 is part of the active site. The cytidylyltransferase stretch occupies residues 344–476 (MTNGCFDILH…VIEKIKLLKD (133 aa)).

This sequence in the N-terminal section; belongs to the carbohydrate kinase PfkB family. It in the C-terminal section; belongs to the cytidylyltransferase family. Homodimer.

It catalyses the reaction D-glycero-beta-D-manno-heptose 7-phosphate + ATP = D-glycero-beta-D-manno-heptose 1,7-bisphosphate + ADP + H(+). The enzyme catalyses D-glycero-beta-D-manno-heptose 1-phosphate + ATP + H(+) = ADP-D-glycero-beta-D-manno-heptose + diphosphate. It participates in nucleotide-sugar biosynthesis; ADP-L-glycero-beta-D-manno-heptose biosynthesis; ADP-L-glycero-beta-D-manno-heptose from D-glycero-beta-D-manno-heptose 7-phosphate: step 1/4. It functions in the pathway nucleotide-sugar biosynthesis; ADP-L-glycero-beta-D-manno-heptose biosynthesis; ADP-L-glycero-beta-D-manno-heptose from D-glycero-beta-D-manno-heptose 7-phosphate: step 3/4. Functionally, catalyzes the phosphorylation of D-glycero-D-manno-heptose 7-phosphate at the C-1 position to selectively form D-glycero-beta-D-manno-heptose-1,7-bisphosphate. Catalyzes the ADP transfer from ATP to D-glycero-beta-D-manno-heptose 1-phosphate, yielding ADP-D-glycero-beta-D-manno-heptose. The chain is Bifunctional protein HldE from Haemophilus influenzae (strain 86-028NP).